We begin with the raw amino-acid sequence, 294 residues long: Tyrosine recombinase XerC (294 aa).

A Core-binding (CB) domain is found at 1 to 85 (MSRLVEDFFA…ACRGFYTWLV (85 aa)). The region spanning 106-283 (KLPRILDADE…DFQYLSKVYD (178 aa)) is the Tyr recombinase domain. Catalysis depends on residues R145, K169, H235, R238, and H261. Y270 serves as the catalytic O-(3'-phospho-DNA)-tyrosine intermediate.

The protein belongs to the 'phage' integrase family. XerC subfamily. As to quaternary structure, forms a cyclic heterotetrameric complex composed of two molecules of XerC and two molecules of XerD.

Its subcellular location is the cytoplasm. In terms of biological role, site-specific tyrosine recombinase, which acts by catalyzing the cutting and rejoining of the recombining DNA molecules. The XerC-XerD complex is essential to convert dimers of the bacterial chromosome into monomers to permit their segregation at cell division. It also contributes to the segregational stability of plasmids. The chain is Tyrosine recombinase XerC from Xylella fastidiosa (strain M23).